Reading from the N-terminus, the 126-residue chain is MRHYEIVFMVHPDQSEQVAGMIERYTGSITEAGGTIHRLEDWGRRQMAYPINKLHKAHYVLMNVESEQAAIDELETAFRYNDAVLRNMIMRTKAAITEPSVMMKAKEERTAKREDAAPRAEEAAAE.

The disordered stretch occupies residues 101–126 (VMMKAKEERTAKREDAAPRAEEAAAE). The span at 104–126 (KAKEERTAKREDAAPRAEEAAAE) shows a compositional bias: basic and acidic residues.

This sequence belongs to the bacterial ribosomal protein bS6 family.

Functionally, binds together with bS18 to 16S ribosomal RNA. This Aliivibrio salmonicida (strain LFI1238) (Vibrio salmonicida (strain LFI1238)) protein is Small ribosomal subunit protein bS6.